Here is a 344-residue protein sequence, read N- to C-terminus: Methionine import ATP-binding protein MetN (344 aa).

Residues 2–241 form the ABC transporter domain; it reads IELQGLSQRF…PQHEVTRAMI (240 aa). Residue 38 to 45 participates in ATP binding; it reads GRSGAGKS.

It belongs to the ABC transporter superfamily. Methionine importer (TC 3.A.1.24) family. The complex is composed of two ATP-binding proteins (MetN), two transmembrane proteins (MetI) and a solute-binding protein (MetQ).

It localises to the cell inner membrane. It catalyses the reaction L-methionine(out) + ATP + H2O = L-methionine(in) + ADP + phosphate + H(+). The enzyme catalyses D-methionine(out) + ATP + H2O = D-methionine(in) + ADP + phosphate + H(+). Functionally, part of the ABC transporter complex MetNIQ involved in methionine import. Responsible for energy coupling to the transport system. The protein is Methionine import ATP-binding protein MetN of Cupriavidus pinatubonensis (strain JMP 134 / LMG 1197) (Cupriavidus necator (strain JMP 134)).